The primary structure comprises 69 residues: Cytochrome c oxidase subunit 8A, mitochondrial (69 aa).

The transit peptide at 1-25 directs the protein to the mitochondrion; it reads MSVLTPLLLRGLTGSARRLPMPCAR. The SIFI-degron motif lies at 2–19; sequence SVLTPLLLRGLTGSARRL. Over 26 to 36 the chain is Mitochondrial matrix; the sequence is VHSKPPREQLG. A helical membrane pass occupies residues 37–60; that stretch reads TMDIAIGLTSCFVCFLLPSGWVLS. Over 61 to 69 the chain is Mitochondrial intermembrane; sequence HLENYKKRE.

Belongs to the cytochrome c oxidase VIII family. As to quaternary structure, component of the cytochrome c oxidase (complex IV, CIV), a multisubunit enzyme composed of 14 subunits. The complex is composed of a catalytic core of 3 subunits MT-CO1, MT-CO2 and MT-CO3, encoded in the mitochondrial DNA, and 11 supernumerary subunits COX4I, COX5A, COX5B, COX6A, COX6B, COX6C, COX7A, COX7B, COX7C, COX8 and NDUFA4, which are encoded in the nuclear genome. The complex exists as a monomer or a dimer and forms supercomplexes (SCs) in the inner mitochondrial membrane with NADH-ubiquinone oxidoreductase (complex I, CI) and ubiquinol-cytochrome c oxidoreductase (cytochrome b-c1 complex, complex III, CIII), resulting in different assemblies (supercomplex SCI(1)III(2)IV(1) and megacomplex MCI(2)III(2)IV(2)). Post-translationally, in response to mitochondrial stress, the precursor protein is ubiquitinated by the SIFI complex in the cytoplasm before mitochondrial import, leading to its degradation. Within the SIFI complex, UBR4 initiates ubiquitin chain that are further elongated or branched by KCMF1.

It is found in the mitochondrion inner membrane. It participates in energy metabolism; oxidative phosphorylation. Component of the cytochrome c oxidase, the last enzyme in the mitochondrial electron transport chain which drives oxidative phosphorylation. The respiratory chain contains 3 multisubunit complexes succinate dehydrogenase (complex II, CII), ubiquinol-cytochrome c oxidoreductase (cytochrome b-c1 complex, complex III, CIII) and cytochrome c oxidase (complex IV, CIV), that cooperate to transfer electrons derived from NADH and succinate to molecular oxygen, creating an electrochemical gradient over the inner membrane that drives transmembrane transport and the ATP synthase. Cytochrome c oxidase is the component of the respiratory chain that catalyzes the reduction of oxygen to water. Electrons originating from reduced cytochrome c in the intermembrane space (IMS) are transferred via the dinuclear copper A center (CU(A)) of subunit 2 and heme A of subunit 1 to the active site in subunit 1, a binuclear center (BNC) formed by heme A3 and copper B (CU(B)). The BNC reduces molecular oxygen to 2 water molecules using 4 electrons from cytochrome c in the IMS and 4 protons from the mitochondrial matrix. This Nycticebus coucang (Slow loris) protein is Cytochrome c oxidase subunit 8A, mitochondrial (COX8A).